The primary structure comprises 278 residues: MAIRKYKPTTPGRRASSVSEFSEITRSTPEKSLLRPLSKTGGRNVHGHITTRHKGGGHKRRYRVIDFRRNDKDGVVAKVAHIEYDPNRTANIALLHYRDGEKRYIIAPRGLKQGALVESGPNADIKVGNNLPLRNIPAGTTIHCVELKPGGGAKMARSAGASIQLLGKEGKYAVLRMPSSEIRRVDIRCRATVGEVGNQEQINIRWGKAGRMRWKGWRPTVRGAAMNPVDHPHGGGEGRTSGGRHPVSPWGQLEGRTRRPNRPSDKMIVRRRRPNKKR.

Disordered regions lie at residues 1–59 and 222–278; these read MAIR…GGHK and RGAA…NKKR. The span at 16-27 shows a compositional bias: polar residues; it reads SSVSEFSEITRS. 2 stretches are compositionally biased toward basic residues: residues 45-59 and 269-278; these read VHGHITTRHKGGGHK and VRRRRPNKKR.

It belongs to the universal ribosomal protein uL2 family. In terms of assembly, part of the 50S ribosomal subunit. Forms a bridge to the 30S subunit in the 70S ribosome.

Functionally, one of the primary rRNA binding proteins. Required for association of the 30S and 50S subunits to form the 70S ribosome, for tRNA binding and peptide bond formation. It has been suggested to have peptidyltransferase activity; this is somewhat controversial. Makes several contacts with the 16S rRNA in the 70S ribosome. This is Large ribosomal subunit protein uL2 from Corynebacterium urealyticum (strain ATCC 43042 / DSM 7109).